Here is a 1046-residue protein sequence, read N- to C-terminus: Protein HBT1 (1046 aa).

3 disordered regions span residues Met-1–Lys-455, Asp-469–Ala-894, and Pro-908–Ile-1046. Position 41 is a phosphoserine (Ser-41). The span at Lys-81–Arg-96 shows a compositional bias: basic and acidic residues. Polar residues-rich tracts occupy residues Ala-98 to Thr-149, Ile-175 to Val-191, and Ala-228 to Ser-301. Ser-303 carries the post-translational modification Phosphoserine. Polar residues predominate over residues Val-327 to Met-341. Ser-363 carries the phosphoserine modification. Polar residues-rich tracts occupy residues Gln-389–Met-408 and Gly-420–His-429. Positions Asp-430–Lys-455 are enriched in basic and acidic residues. The segment covering Tyr-488–Leu-498 has biased composition (polar residues). Ser-491 is modified (phosphoserine). Basic and acidic residues predominate over residues Gly-529 to Arg-538. Polar residues predominate over residues Gln-548 to Asp-559. Phosphoserine is present on Ser-561. The span at Gly-570–Val-582 shows a compositional bias: polar residues. Residues Met-586–Lys-597 are compositionally biased toward basic and acidic residues. The span at Tyr-605 to Asp-619 shows a compositional bias: acidic residues. Residues Ser-621–Ser-630 show a composition bias toward basic and acidic residues. Phosphoserine is present on Ser-671. The span at Phe-742–Thr-756 shows a compositional bias: polar residues. The span at Asp-773–Leu-782 shows a compositional bias: basic and acidic residues. Composition is skewed to polar residues over residues Asn-792–Lys-802 and Ser-837–Tyr-855. Residue Tyr-855 is modified to Phosphotyrosine. Ser-857 is subject to Phosphoserine. Residues Lys-868–Asp-890 are compositionally biased toward basic and acidic residues. The segment covering Asp-922–Gln-951 has biased composition (polar residues). Residues Gly-952 to Gly-963 show a composition bias toward low complexity. Residues Lys-964–Arg-976 show a composition bias toward basic residues. Phosphoserine is present on Ser-1005. Residues Asp-1006–Glu-1019 are compositionally biased toward acidic residues. At Ser-1034 the chain carries Phosphoserine.

Conjugated with HUB1. HUB1 has not the classical C-terminal Gly residue, so it is still unknown how conjugation may occur.

Its subcellular location is the cytoplasm. Functionally, polarity-determining protein which forms a conjugate with the ubiquitin-like modifier HUB1. Involved in bud site selection and cellular morphogenesis during conjugation. Required for survival during stationary phase. This chain is Protein HBT1 (HBT1), found in Saccharomyces cerevisiae (strain ATCC 204508 / S288c) (Baker's yeast).